Here is a 327-residue protein sequence, read N- to C-terminus: MQIKRSIEKIPGGMMLVPLFLGALCHTFSPEAGKYFGSFTNGMITGTVPILAVWFFCMGASIKLSATGTVLRKSGTLVVTKIAVAWVVAAIASRIIPEHGVEVGFFAGLSTLALVAAMDMTNGGLYASIMQQYGTKEEAGAFVLMSLESGPLMTMIILGTAGIASFEPHVFVGAVLPFLVGFALGNLDPELREFFSKAVQTLIPFFAFALGNTIDLTVIAQTGLLGILLGVAVIIVTGIPLIIADKLIGGGDGTAGIAASSSAGAAVATPVLIAEMVPAFKPMAPAATSLVATAVIVTSILVPILTSIWSRKVKARAAKIEILGTVK.

10 helical membrane-spanning segments follow: residues 10-30 (IPGGMMLVPLFLGALCHTFSP), 42-62 (GMITGTVPILAVWFFCMGASI), 73-93 (KSGTLVVTKIAVAWVVAAIAS), 95-115 (IIPEHGVEVGFFAGLSTLALV), 139-159 (AGAFVLMSLESGPLMTMIILG), 163-183 (IASFEPHVFVGAVLPFLVGFA), 199-219 (VQTLIPFFAFALGNTIDLTVI), 224-244 (LLGILLGVAVIIVTGIPLIIA), 254-274 (TAGIAASSSAGAAVATPVLIA), and 289-309 (SLVATAVIVTSILVPILTSIW).

The protein belongs to the KdgT transporter family.

The protein resides in the cell inner membrane. It catalyses the reaction 2-dehydro-3-deoxy-D-gluconate(in) + H(+)(in) = 2-dehydro-3-deoxy-D-gluconate(out) + H(+)(out). Functionally, catalyzes the proton-dependent uptake of 2-keto-3-deoxygluconate (KDG) into the cell. The polypeptide is 2-keto-3-deoxygluconate permease (Escherichia coli O7:K1 (strain IAI39 / ExPEC)).